A 383-amino-acid polypeptide reads, in one-letter code: MKNKLPPFIEIYRALIATPSISATEEALDQSNADLITLLADWFKNLGFNVEVQPVPGTRNKFNMLASTGQGAGGLLLAGHTDTVPFDDGRWTRDPFTLTEHDGKLYGLGTADMKGFFAFILDALRDVDVTKLKKPLYILATADEETSMAGARYFAETTALRPDCAIIGEPTSLQPVRAHKGHISNAIRIQGQSGHSSDPARGVNAIELMHDAIGHILQLRDSLKERYHYEAFTVPYPTLNLGHIHGGDASNRICACCELHMDIRPLPGMTLNELNGLLNDALAPVSERWPGRLTVDELHPPIPGYECPPNHQLVEVVEKLLGAKTEVVNYCTEAPFIQTLCPTLVLGPGSINQAHQPDEYLETRFIKPTRELITQVIHHFCWH.

H80 serves as a coordination point for Zn(2+). D82 is an active-site residue. D112 contacts Zn(2+). E144 is an active-site residue. Zn(2+) is bound by residues E145, E169, and H355.

This sequence belongs to the peptidase M20A family. ArgE subfamily. Homodimer. The cofactor is Zn(2+). It depends on Co(2+) as a cofactor. Requires glutathione as cofactor.

Its subcellular location is the cytoplasm. The catalysed reaction is N(2)-acetyl-L-ornithine + H2O = L-ornithine + acetate. It functions in the pathway amino-acid biosynthesis; L-arginine biosynthesis; L-ornithine from N(2)-acetyl-L-ornithine (linear): step 1/1. In terms of biological role, catalyzes the hydrolysis of the amide bond of N(2)-acetylated L-amino acids. Cleaves the acetyl group from N-acetyl-L-ornithine to form L-ornithine, an intermediate in L-arginine biosynthesis pathway, and a branchpoint in the synthesis of polyamines. The chain is Acetylornithine deacetylase from Shigella dysenteriae serotype 1 (strain Sd197).